An 87-amino-acid chain; its full sequence is Cuticle protein 1 (87 aa).

Residue glutamine 1 is modified to Pyrrolidone carboxylic acid. 3 repeat units span residues 5 to 20, 43 to 58, and 71 to 86. 3 disulfide bridges follow: cysteine 14-cysteine 20, cysteine 52-cysteine 58, and cysteine 80-cysteine 86.

In Blaberus craniifer (Death's head cockroach), this protein is Cuticle protein 1.